The following is a 379-amino-acid chain: Protein RecA (379 aa).

An ATP-binding site is contributed by 79–86; sequence GPESSGKT.

Belongs to the RecA family.

The protein resides in the cytoplasm. Its function is as follows. Can catalyze the hydrolysis of ATP in the presence of single-stranded DNA, the ATP-dependent uptake of single-stranded DNA by duplex DNA, and the ATP-dependent hybridization of homologous single-stranded DNAs. It interacts with LexA causing its activation and leading to its autocatalytic cleavage. The protein is Protein RecA of Streptococcus uberis (strain ATCC BAA-854 / 0140J).